The primary structure comprises 158 residues: Cyclic pyranopterin monophosphate synthase (158 aa).

Residues 74 to 76 and 112 to 113 each bind substrate; these read MCH and ME. Residue D127 is part of the active site.

It belongs to the MoaC family. In terms of assembly, homohexamer; trimer of dimers.

The catalysed reaction is (8S)-3',8-cyclo-7,8-dihydroguanosine 5'-triphosphate = cyclic pyranopterin phosphate + diphosphate. Its pathway is cofactor biosynthesis; molybdopterin biosynthesis. Catalyzes the conversion of (8S)-3',8-cyclo-7,8-dihydroguanosine 5'-triphosphate to cyclic pyranopterin monophosphate (cPMP). The protein is Cyclic pyranopterin monophosphate synthase of Thermoanaerobacter pseudethanolicus (strain ATCC 33223 / 39E) (Clostridium thermohydrosulfuricum).